Consider the following 318-residue polypeptide: NADH-ubiquinone oxidoreductase chain 1 (318 aa).

The next 9 helical transmembrane spans lie at 2–22, 37–57, 69–89, 100–120, 136–156, 171–191, 231–251, 253–273, and 293–313; these read FLMNILCLVIPILLAMAFLTL, PNIVGPYGLLQPIADAIKLFI, LMFTLAPTLAFTLALSLWIPM, LGVLFILALSSLAVYSILWSG, VAQTISYEVTLAIILLSIMMM, HMWLIFPLWPLAMMWFISTLA, IIMMNALTTTLFLGAFHNPLF, ELFTVNFITKTLILTMMFLWV, and FLPLTLALCMFHVSMPALSAG.

Belongs to the complex I subunit 1 family. As to quaternary structure, core subunit of respiratory chain NADH dehydrogenase (Complex I) which is composed of 45 different subunits.

Its subcellular location is the mitochondrion inner membrane. The enzyme catalyses a ubiquinone + NADH + 5 H(+)(in) = a ubiquinol + NAD(+) + 4 H(+)(out). Core subunit of the mitochondrial membrane respiratory chain NADH dehydrogenase (Complex I) which catalyzes electron transfer from NADH through the respiratory chain, using ubiquinone as an electron acceptor. Essential for the catalytic activity and assembly of complex I. The protein is NADH-ubiquinone oxidoreductase chain 1 (MT-ND1) of Euphractus sexcinctus (Six-banded armadillo).